The following is a 941-amino-acid chain: Isoleucine--tRNA ligase (941 aa).

The 'HIGH' region signature appears at proline 58–histidine 68. Residue glutamate 564 participates in L-isoleucyl-5'-AMP binding. Residues lysine 605–serine 609 carry the 'KMSKS' region motif. Residue lysine 608 participates in ATP binding. Zn(2+)-binding residues include cysteine 904, cysteine 907, cysteine 924, and cysteine 927.

Belongs to the class-I aminoacyl-tRNA synthetase family. IleS type 1 subfamily. In terms of assembly, monomer. Zn(2+) serves as cofactor.

It is found in the cytoplasm. It carries out the reaction tRNA(Ile) + L-isoleucine + ATP = L-isoleucyl-tRNA(Ile) + AMP + diphosphate. Its function is as follows. Catalyzes the attachment of isoleucine to tRNA(Ile). As IleRS can inadvertently accommodate and process structurally similar amino acids such as valine, to avoid such errors it has two additional distinct tRNA(Ile)-dependent editing activities. One activity is designated as 'pretransfer' editing and involves the hydrolysis of activated Val-AMP. The other activity is designated 'posttransfer' editing and involves deacylation of mischarged Val-tRNA(Ile). The polypeptide is Isoleucine--tRNA ligase (Hahella chejuensis (strain KCTC 2396)).